A 452-amino-acid chain; its full sequence is Digeranylgeranylglycerophospholipid reductase (452 aa).

FAD contacts are provided by residues 15–16 (FA), 35–36 (DS), and 45–50 (KPCGDA). Residue H55 participates in a 2,3-bis-O-phytanyl-sn-glycerol 1-phospholipid binding. Residues A122 and D288 each coordinate FAD. Position 297 (H297) interacts with a 2,3-bis-O-phytanyl-sn-glycerol 1-phospholipid. Position 300–301 (300–301 (GK)) interacts with FAD. Cysteines 310 and 335 form a disulfide. Y340 is an a 2,3-bis-O-phytanyl-sn-glycerol 1-phospholipid binding site.

The protein belongs to the geranylgeranyl reductase family. As to quaternary structure, monomer. Requires FAD as cofactor.

It catalyses the reaction a 2,3-bis-O-phytanyl-sn-glycerol 1-phospholipid + 8 A = a 2,3-bis-O-(geranylgeranyl)-sn-glycerol 1-phospholipid + 8 AH2. It carries out the reaction 2,3-bis-O-(phytanyl)-sn-glycerol 1-phosphate + 8 A = 2,3-bis-O-(geranylgeranyl)-sn-glycerol 1-phosphate + 8 AH2. The enzyme catalyses sn-3-O-phytanylglycerol 1-phosphate + 4 A = sn-3-O-(geranylgeranyl)glycerol 1-phosphate + 4 AH2. The catalysed reaction is phytyl diphosphate + 3 A = (2E,6E,10E)-geranylgeranyl diphosphate + 3 AH2. The protein operates within membrane lipid metabolism; glycerophospholipid metabolism. Functionally, is involved in the reduction of 2,3-digeranylgeranylglycerophospholipids (unsaturated archaeols) into 2,3-diphytanylglycerophospholipids (saturated archaeols) in the biosynthesis of archaeal membrane lipids. Catalyzes the formation of archaetidic acid (2,3-di-O-phytanyl-sn-glyceryl phosphate) from 2,3-di-O-geranylgeranylglyceryl phosphate (DGGGP) via the hydrogenation of each double bond of the isoprenoid chains. Is not active with NADPH or NADH as an electron donor; the physiological reducing agent is unknown. Is also active on the more upstream precursors of membrane lipid biosynthesis, catalyzing the complete reduction of 3-O-geranylgeranylglyceryl phosphate (GGGP) to 3-O-phytanylglyceryl phosphate, and the partial reduction of geranylgeranyl diphosphate (GGPP) to phytyl diphosphate, thus reducing three of four GGPP double bonds and preserving the allylic double bond (at position 2). This reaction product is a reactive prenyl donor, which can be used as a substrate by archaeal prenyltransferases such as GGGP synthases. The chain is Digeranylgeranylglycerophospholipid reductase from Sulfolobus acidocaldarius (strain ATCC 33909 / DSM 639 / JCM 8929 / NBRC 15157 / NCIMB 11770).